An 84-amino-acid chain; its full sequence is Large ribosomal subunit protein eL34 (84 aa).

Belongs to the eukaryotic ribosomal protein eL34 family.

The chain is Large ribosomal subunit protein eL34 from Pyrobaculum islandicum (strain DSM 4184 / JCM 9189 / GEO3).